The sequence spans 227 residues: Isopentenyl-diphosphate Delta-isomerase 1 (227 aa).

A substrate-binding site is contributed by Lys-36. His-40 and His-51 together coordinate Mg(2+). Positions 49–199 constitute a Nudix hydrolase domain; sequence LLHRAFSVFL…EIKITPWFQI (151 aa). Arg-70 and Lys-74 together coordinate substrate. Cys-86 is an active-site residue. Ser-87 provides a ligand contact to substrate. Residues Glu-146 and Glu-148 each coordinate Mg(2+). Residue Glu-148 is part of the active site. Lys-176 carries the N6-acetyllysine modification. The Microbody targeting signal motif lies at 225–227; it reads HRM.

The protein belongs to the IPP isomerase type 1 family. In terms of assembly, monomer. Requires Mg(2+) as cofactor.

It localises to the peroxisome. It catalyses the reaction isopentenyl diphosphate = dimethylallyl diphosphate. It functions in the pathway isoprenoid biosynthesis; dimethylallyl diphosphate biosynthesis; dimethylallyl diphosphate from isopentenyl diphosphate: step 1/1. Its function is as follows. Catalyzes the 1,3-allylic rearrangement of the homoallylic substrate isopentenyl (IPP) to its highly electrophilic allylic isomer, dimethylallyl diphosphate (DMAPP). The sequence is that of Isopentenyl-diphosphate Delta-isomerase 1 (IDI1) from Macaca fascicularis (Crab-eating macaque).